Consider the following 152-residue polypeptide: Actin-related protein 2/3 complex subunit 5-B (152 aa).

The segment at 21 to 44 is disordered; it reads NKFVDDQLQEEPAEPQGPDEAEVD. Positions 27 to 43 are enriched in acidic residues; sequence QLQEEPAEPQGPDEAEV.

The protein belongs to the ARPC5 family. As to quaternary structure, component of the Arp2/3 complex composed of actr2/arp2, actr3/arp3, arpc1 (arpc1a or arpc1b), arpc2, arpc3, arpc4 and arpc5.

The protein resides in the cytoplasm. It is found in the cytoskeleton. The protein localises to the cell projection. Its subcellular location is the nucleus. Functionally, component of the Arp2/3 complex, a multiprotein complex that mediates actin polymerization upon stimulation by nucleation-promoting factor (NPF). The Arp2/3 complex mediates the formation of branched actin networks in the cytoplasm, providing the force for cell motility. In addition to its role in the cytoplasmic cytoskeleton, the Arp2/3 complex also promotes actin polymerization in the nucleus, thereby regulating gene transcription and repair of damaged DNA. The Arp2/3 complex promotes homologous recombination (HR) repair in response to DNA damage by promoting nuclear actin polymerization, leading to drive motility of double-strand breaks (DSBs). The chain is Actin-related protein 2/3 complex subunit 5-B (arpc5-b) from Xenopus laevis (African clawed frog).